A 328-amino-acid chain; its full sequence is NADH-quinone oxidoreductase subunit H 2 (328 aa).

8 helical membrane passes run 3 to 23, 77 to 97, 119 to 139, 165 to 185, 191 to 211, 250 to 270, 272 to 292, and 307 to 327; these read LIVALGVIVFKVALVIAILLL, FLFKLAPILALAPPFVVFAAI, VALLFVFAVIGLEVYGVIFGG, MGFAVIGVVMLAQSMSLLDIV, VWNVVYQPIGFFVFFVAGLAE, MVLVSVLTVILFFGGWNGVLI, LPPLLWFLLKVAFFVYLFMWF, and IGWKVLLPLSLANIIISGVVF.

It belongs to the complex I subunit 1 family. In terms of assembly, NDH-1 is composed of 14 different subunits. Subunits NuoA, H, J, K, L, M, N constitute the membrane sector of the complex.

The protein localises to the cell inner membrane. The enzyme catalyses a quinone + NADH + 5 H(+)(in) = a quinol + NAD(+) + 4 H(+)(out). NDH-1 shuttles electrons from NADH, via FMN and iron-sulfur (Fe-S) centers, to quinones in the respiratory chain. The immediate electron acceptor for the enzyme in this species is believed to be ubiquinone. Couples the redox reaction to proton translocation (for every two electrons transferred, four hydrogen ions are translocated across the cytoplasmic membrane), and thus conserves the redox energy in a proton gradient. This subunit may bind ubiquinone. This chain is NADH-quinone oxidoreductase subunit H 2, found in Rhizobium meliloti (strain 1021) (Ensifer meliloti).